The primary structure comprises 296 residues: Cadherin-4 (296 aa).

Cadherin domains follow at residues 1-101, 102-216, and 217-296; these read NVPE…RPEF, INQV…PPEF, and TTST…MLTI. Over 1-296 the chain is Extracellular; it reads NVPENSRGPF…ELNRAFMLTI (296 aa). 2 N-linked (GlcNAc...) asparagine glycosylation sites follow: asparagine 107 and asparagine 236.

Its subcellular location is the cell membrane. In terms of biological role, cadherins are calcium-dependent cell adhesion proteins. They preferentially interact with themselves in a homophilic manner in connecting cells; cadherins may thus contribute to the sorting of heterogeneous cell types. May play an important role in retinal development. In Rattus norvegicus (Rat), this protein is Cadherin-4 (Cdh4).